Here is a 230-residue protein sequence, read N- to C-terminus: Orotidine 5'-phosphate decarboxylase (230 aa).

Substrate-binding positions include Asp-16, Lys-38, 65 to 74 (DLKLHDIGNT), Thr-119, Arg-180, Gln-189, Gly-209, and Arg-210. Lys-67 (proton donor) is an active-site residue.

It belongs to the OMP decarboxylase family. Type 1 subfamily. As to quaternary structure, homodimer.

The enzyme catalyses orotidine 5'-phosphate + H(+) = UMP + CO2. It functions in the pathway pyrimidine metabolism; UMP biosynthesis via de novo pathway; UMP from orotate: step 2/2. Its function is as follows. Catalyzes the decarboxylation of orotidine 5'-monophosphate (OMP) to uridine 5'-monophosphate (UMP). This Methylobacterium radiotolerans (strain ATCC 27329 / DSM 1819 / JCM 2831 / NBRC 15690 / NCIMB 10815 / 0-1) protein is Orotidine 5'-phosphate decarboxylase.